Here is a 419-residue protein sequence, read N- to C-terminus: Oligouridylate-binding protein 1B (419 aa).

RRM domains are found at residues 54 to 128 (RSVY…WAYA) and 139 to 217 (FNIF…WATK). Residues 217 to 257 (KGATSGEDKQSSDSKSVVELTSGVSEDGKDTTNGEAPENNA) form a disordered region. Residue Ser241 is modified to Phosphoserine. The region spanning 260–335 (TTVYVGNLAP…RQMKCSWGSK (76 aa)) is the RRM 3 domain.

Interacts with UBA1A and UBA2A.

It is found in the nucleus. Heterogeneous nuclear ribonucleoprotein (hnRNP)-like protein that acts as a component of the pre-mRNA processing machinery. Functions to facilitate the nuclear maturation of plant pre-mRNAs. The polypeptide is Oligouridylate-binding protein 1B (UBP1B) (Arabidopsis thaliana (Mouse-ear cress)).